A 708-amino-acid polypeptide reads, in one-letter code: Ubiquitin thioesterase Zranb1 (708 aa).

The segment at Glu-3–Ser-33 adopts a RanBP2-type 1 zinc-finger fold. Zn(2+) contacts are provided by Cys-10, Cys-13, Cys-24, and Cys-27. Residues Thr-38–Arg-73 form a disordered region. 2 consecutive RanBP2-type zinc fingers follow at residues Asn-84 to Thr-113 and Arg-149 to Asn-178. Zn(2+) contacts are provided by Cys-90, Cys-93, Cys-104, Cys-107, Cys-155, Cys-158, Cys-169, and Cys-172. The tract at residues Arg-202–Ser-224 is disordered. The segment covering Ser-209–Thr-219 has biased composition (polar residues). 2 ANK repeats span residues Lys-260 to Asp-290 and Tyr-313 to Ala-340. The OTU domain occupies Leu-432 to Met-592. Cys-443 acts as the Nucleophile in catalysis. Residue His-585 is the Proton acceptor of the active site.

The protein belongs to the peptidase C64 family. Interacts with TRAF6. Interacts with APC.

It localises to the cytoplasm. The protein localises to the nucleus. It catalyses the reaction Thiol-dependent hydrolysis of ester, thioester, amide, peptide and isopeptide bonds formed by the C-terminal Gly of ubiquitin (a 76-residue protein attached to proteins as an intracellular targeting signal).. Functionally, ubiquitin thioesterase, which specifically hydrolyzes 'Lys-29'-linked and 'Lys-33'-linked diubiquitin. Also cleaves 'Lys-63'-linked chains, but with 40-fold less efficiency compared to 'Lys-29'-linked ones. Positive regulator of the Wnt signaling pathway that deubiquitinates APC protein, a negative regulator of Wnt-mediated transcription. Acts as a regulator of autophagy by mediating deubiquitination of PIK3C3/VPS34, thereby promoting autophagosome maturation. Plays a role in the regulation of cell morphology and cytoskeletal organization. Required in the stress fiber dynamics and cell migration. This Mus musculus (Mouse) protein is Ubiquitin thioesterase Zranb1.